A 122-amino-acid chain; its full sequence is Phosphoribosyl-ATP pyrophosphatase (122 aa).

Belongs to the PRA-PH family.

It is found in the cytoplasm. It carries out the reaction 1-(5-phospho-beta-D-ribosyl)-ATP + H2O = 1-(5-phospho-beta-D-ribosyl)-5'-AMP + diphosphate + H(+). The protein operates within amino-acid biosynthesis; L-histidine biosynthesis; L-histidine from 5-phospho-alpha-D-ribose 1-diphosphate: step 2/9. This chain is Phosphoribosyl-ATP pyrophosphatase, found in Burkholderia thailandensis (strain ATCC 700388 / DSM 13276 / CCUG 48851 / CIP 106301 / E264).